The primary structure comprises 294 residues: 2-oxo-3-(phosphooxy)propyl 3-oxoalkanoate synthase (294 aa).

This sequence belongs to the AfsA family.

The enzyme catalyses a medium-chain 3-oxoacyl-[ACP] + dihydroxyacetone phosphate = a (4-alkanoyl-5-oxo-2,5-dihydrofuran-3-yl)methyl phosphate + holo-[ACP] + H2O. In terms of biological role, involved in the biosynthesis of virginiae butanolide (VB), a gamma-butyrolactone autoregulator that triggers the production of the streptogramin antibiotic virginiamycin. The protein is 2-oxo-3-(phosphooxy)propyl 3-oxoalkanoate synthase of Streptomyces virginiae (Streptomyces cinnamonensis).